A 371-amino-acid polypeptide reads, in one-letter code: Envelope glycoprotein M (371 aa).

Residues 1–13 are Intravirion-facing; sequence MAPSHVDKVNTRT. The chain crosses the membrane as a helical span at residues 14 to 34; sequence WSASIVFMVLTFVNVSVHLVL. Residues 35–79 are Virion surface-facing; the sequence is SNFPHLGYPCVYYHVVDFERLNMSAYNVMHLHTPMLFLDSVQLVC. A helical membrane pass occupies residues 80-100; sequence YAVFMQLVFLAVTIYYLVCWI. Over 101-126 the chain is Intravirion; sequence KISMRKDKGMSLNQSTRDISYMGDSL. The helical transmembrane segment at 127 to 147 threads the bilayer; sequence TAFLFILSMDTFQLFTLTMSF. Residues 148-151 lie on the Virion surface side of the membrane; it reads RLPS. Residues 152–172 form a helical membrane-spanning segment; it reads MIAFMAAVHFFCLTIFNVSMV. At 173–200 the chain is on the intravirion side; it reads TQYRSYKRSLFFFSRLHPKLKGTVQFRT. The helical transmembrane segment at 201–221 threads the bilayer; sequence LIVNLVEVALGFNTTVVAMAL. The Virion surface portion of the chain corresponds to 222 to 239; the sequence is CYGFGNNFFVRTGHMVLA. The chain crosses the membrane as a helical span at residues 240–260; it reads VFVVYAIISIIYFLLIEAVFF. Residues 261–264 lie on the Intravirion side of the membrane; the sequence is QYVK. A helical transmembrane segment spans residues 265-285; sequence VQFGYHLGAFFGLCGLIYPIV. Over 286-298 the chain is Virion surface; the sequence is QYDTFLSNEYRTG. The chain crosses the membrane as a helical span at residues 299–319; that stretch reads ISWSFGMLFFIWAMFTTCRAV. Residues 320–371 lie on the Intravirion side of the membrane; the sequence is RYFRGRGSGSVKYQALATASGEEVAALSHHDSLESRRLREEEDDDDEDFEDA. A disordered region spans residues 346 to 371; sequence LSHHDSLESRRLREEEDDDDEDFEDA. Positions 347-359 are enriched in basic and acidic residues; it reads SHHDSLESRRLRE. The span at 360-371 shows a compositional bias: acidic residues; that stretch reads EEDDDDEDFEDA.

The protein belongs to the herpesviridae glycoprotein M family. Interacts (via N-terminus) with gN (via N-terminus). The gM-gN heterodimer forms the gCII complex.

Its subcellular location is the virion membrane. The protein localises to the host Golgi apparatus. The protein resides in the host trans-Golgi network. It is found in the host endosome membrane. It localises to the host nucleus inner membrane. Envelope glycoprotein important for virion assembly and egress. Plays a role in the correct incorporation of gH-gL into virion membrane. Directs the glycoprotein N (gN) to the host trans-Golgi network. In Homo sapiens (Human), this protein is Envelope glycoprotein M.